Reading from the N-terminus, the 126-residue chain is Aspartate 1-decarboxylase (126 aa).

Serine 25 acts as the Schiff-base intermediate with substrate; via pyruvic acid in catalysis. At serine 25 the chain carries Pyruvic acid (Ser). Threonine 57 contributes to the substrate binding site. Tyrosine 58 serves as the catalytic Proton donor. 73-75 contacts substrate; that stretch reads GAA.

This sequence belongs to the PanD family. In terms of assembly, heterooctamer of four alpha and four beta subunits. Pyruvate serves as cofactor. In terms of processing, is synthesized initially as an inactive proenzyme, which is activated by self-cleavage at a specific serine bond to produce a beta-subunit with a hydroxyl group at its C-terminus and an alpha-subunit with a pyruvoyl group at its N-terminus.

The protein localises to the cytoplasm. It carries out the reaction L-aspartate + H(+) = beta-alanine + CO2. The protein operates within cofactor biosynthesis; (R)-pantothenate biosynthesis; beta-alanine from L-aspartate: step 1/1. Its function is as follows. Catalyzes the pyruvoyl-dependent decarboxylation of aspartate to produce beta-alanine. This Salmonella arizonae (strain ATCC BAA-731 / CDC346-86 / RSK2980) protein is Aspartate 1-decarboxylase.